The chain runs to 172 residues: R-phycocyanin-2 beta chain (172 aa).

An N4-methylasparagine modification is found at asparagine 72. Cysteine 82 is a binding site for (2R,3E)-phycocyanobilin. Cysteine 153 is a binding site for (2R,3E)-phycoerythrobilin.

This sequence belongs to the phycobiliprotein family. Heterodimer of an alpha and a beta chain. In terms of processing, contains two covalently linked bilin chromophores.

The protein resides in the cellular thylakoid membrane. Its function is as follows. Light-harvesting photosynthetic bile pigment-protein from the phycobiliprotein complex. This is R-phycocyanin-2 beta chain (rpcB) from Synechococcus sp. (strain WH8103).